Here is a 393-residue protein sequence, read N- to C-terminus: NAD(P)H-quinone oxidoreductase subunit H, chloroplastic (393 aa).

Belongs to the complex I 49 kDa subunit family. As to quaternary structure, NDH is composed of at least 16 different subunits, 5 of which are encoded in the nucleus.

It localises to the plastid. It is found in the chloroplast thylakoid membrane. The enzyme catalyses a plastoquinone + NADH + (n+1) H(+)(in) = a plastoquinol + NAD(+) + n H(+)(out). The catalysed reaction is a plastoquinone + NADPH + (n+1) H(+)(in) = a plastoquinol + NADP(+) + n H(+)(out). Functionally, NDH shuttles electrons from NAD(P)H:plastoquinone, via FMN and iron-sulfur (Fe-S) centers, to quinones in the photosynthetic chain and possibly in a chloroplast respiratory chain. The immediate electron acceptor for the enzyme in this species is believed to be plastoquinone. Couples the redox reaction to proton translocation, and thus conserves the redox energy in a proton gradient. The polypeptide is NAD(P)H-quinone oxidoreductase subunit H, chloroplastic (Nicotiana tomentosiformis (Tobacco)).